The following is a 344-amino-acid chain: Fibronectin type 3 and ankyrin repeat domains 1 protein (344 aa).

Residues 11–108 (KPHPPVVGKV…VVSVATTREP (98 aa)) enclose the Fibronectin type-III domain. ANK repeat units lie at residues 109-139 (ISSE…MIDV), 143-172 (FGFT…DVNL), 176-205 (SGKD…SWEA), 209-238 (GGCT…EVDV), 243-273 (SGWT…DVNI), and 277-306 (DGKT…DATV).

As to quaternary structure, interacts with COPS5; regulates the phosphorylation of JUN and the transcriptional activity of AP-1. Interacts with RYBP; may prevent the ubiquitin-mediated proteasomal degradation of FANK1. In terms of processing, polyubiquitinated. Polyubiquitination leads to proteasomal degradation. Mostly restricted to testis (at protein level), including mid to late pachytene spermatocytes (stages VI-X), diplotene spermatocytes (stage XI), meiotically dividing spermatocytes (stage XII) and spermatids in steps 1-14. Highest levels in late pachytene spermatocytes and spermatids in steps 1-9.

It localises to the nucleus. It is found in the cytoplasm. The protein localises to the cytosol. Its subcellular location is the cytoskeleton. The protein resides in the cilium basal body. It localises to the cell projection. It is found in the cilium. Its function is as follows. Through the activation of JUN and AP-1-mediated transcription, may regulate apoptosis. This chain is Fibronectin type 3 and ankyrin repeat domains 1 protein, found in Mus musculus (Mouse).